Consider the following 180-residue polypeptide: Large ribosomal subunit protein uL6 (180 aa).

It belongs to the universal ribosomal protein uL6 family. In terms of assembly, part of the 50S ribosomal subunit.

In terms of biological role, this protein binds to the 23S rRNA, and is important in its secondary structure. It is located near the subunit interface in the base of the L7/L12 stalk, and near the tRNA binding site of the peptidyltransferase center. The sequence is that of Large ribosomal subunit protein uL6 from Clostridium beijerinckii (strain ATCC 51743 / NCIMB 8052) (Clostridium acetobutylicum).